The chain runs to 40 residues: Large ribosomal subunit protein bL33c (40 aa).

The protein belongs to the bacterial ribosomal protein bL33 family.

It is found in the plastid. The protein localises to the chloroplast. The chain is Large ribosomal subunit protein bL33c (rpl33) from Pisum sativum (Garden pea).